The primary structure comprises 142 residues: ATP synthase epsilon chain (142 aa).

This sequence belongs to the ATPase epsilon chain family. F-type ATPases have 2 components, CF(1) - the catalytic core - and CF(0) - the membrane proton channel. CF(1) has five subunits: alpha(3), beta(3), gamma(1), delta(1), epsilon(1). CF(0) has three main subunits: a, b and c.

It localises to the cell inner membrane. Produces ATP from ADP in the presence of a proton gradient across the membrane. In Koribacter versatilis (strain Ellin345), this protein is ATP synthase epsilon chain.